The following is a 119-amino-acid chain: Large ribosomal subunit protein bL20 (119 aa).

The protein belongs to the bacterial ribosomal protein bL20 family.

Binds directly to 23S ribosomal RNA and is necessary for the in vitro assembly process of the 50S ribosomal subunit. It is not involved in the protein synthesizing functions of that subunit. This chain is Large ribosomal subunit protein bL20, found in Clostridium botulinum (strain ATCC 19397 / Type A).